Reading from the N-terminus, the 211-residue chain is Protein GrpE (211 aa).

The segment covering 1-13 (MVDKDEEQIKQNV) has biased composition (basic and acidic residues). The segment at 1 to 38 (MVDKDEEQIKQNVEEDLSSTVEQTGEENIEFPSAPNHP) is disordered.

It belongs to the GrpE family. Homodimer.

The protein resides in the cytoplasm. Functionally, participates actively in the response to hyperosmotic and heat shock by preventing the aggregation of stress-denatured proteins, in association with DnaK and GrpE. It is the nucleotide exchange factor for DnaK and may function as a thermosensor. Unfolded proteins bind initially to DnaJ; upon interaction with the DnaJ-bound protein, DnaK hydrolyzes its bound ATP, resulting in the formation of a stable complex. GrpE releases ADP from DnaK; ATP binding to DnaK triggers the release of the substrate protein, thus completing the reaction cycle. Several rounds of ATP-dependent interactions between DnaJ, DnaK and GrpE are required for fully efficient folding. The polypeptide is Protein GrpE (Protochlamydia amoebophila (strain UWE25)).